Here is a 101-residue protein sequence, read N- to C-terminus: Protein Tat (101 aa).

An interaction with human CREBBP region spans residues M1–N24. Positions M1 to G48 are transactivation. Zn(2+)-binding residues include C22, C25, and C27. The tract at residues C22–C37 is cysteine-rich. K28 is modified (N6-acetyllysine; by host PCAF). Zn(2+) is bound by residues C30, H33, C34, and C37. The interval F38 to G48 is core. The tract at residues Y47–D101 is disordered. Basic residues predominate over residues G48–A58. The Nuclear localization signal, RNA-binding (TAR), and protein transduction motif lies at R49–R57. Residues R49–E86 form an interaction with the host capping enzyme RNGTT region. Residues K50 and K51 each carry the N6-acetyllysine; by host EP300 and GCN5L2 modification. An asymmetric dimethylarginine; by host PRMT6 mark is found at R52 and R53. Polar residues predominate over residues D61–G79. A Glycyl lysine isopeptide (Lys-Gly) (interchain with G-Cter in ubiquitin) cross-link involves residue K71. The Cell attachment site motif lies at R78–D80. Basic and acidic residues predominate over residues G83–D101.

Belongs to the lentiviruses Tat family. Interacts with host CCNT1. Associates with the P-TEFb complex composed at least of Tat, P-TEFb (CDK9 and CCNT1), TAR RNA, RNA Pol II. Recruits the HATs CREBBP, TAF1/TFIID, EP300, PCAF and GCN5L2. Interacts with host KAT5/Tip60; this interaction targets the latter to degradation. Interacts with the host deacetylase SIRT1. Interacts with host capping enzyme RNGTT; this interaction stimulates RNGTT. Binds to host KDR, and to the host integrins ITGAV/ITGB3 and ITGA5/ITGB1. Interacts with host KPNB1/importin beta-1 without previous binding to KPNA1/importin alpha-1. Interacts with EIF2AK2. Interacts with host nucleosome assembly protein NAP1L1; this interaction may be required for the transport of Tat within the nucleus, since the two proteins interact at the nuclear rim. Interacts with host C1QBP/SF2P32; this interaction involves lysine-acetylated Tat. Interacts with the host chemokine receptors CCR2, CCR3 and CXCR4. Interacts with host DPP4/CD26; this interaction may trigger an anti-proliferative effect. Interacts with host LDLR. Interacts with the host extracellular matrix metalloproteinase MMP1. Interacts with host PRMT6; this interaction mediates Tat's methylation. Interacts with, and is ubiquitinated by MDM2/Hdm2. Interacts with host PSMC3 and HTATIP2. Interacts with STAB1; this interaction may overcome SATB1-mediated repression of IL2 and IL2RA (interleukin) in T cells by binding to the same domain than HDAC1. Interacts (when acetylated) with human CDK13, thereby increasing HIV-1 mRNA splicing and promoting the production of the doubly spliced HIV-1 protein Nef. Interacts with host TBP; this interaction modulates the activity of transcriptional pre-initiation complex. Interacts with host RELA. Interacts with host PLSCR1; this interaction negatively regulates Tat transactivation activity by altering its subcellular distribution. In terms of processing, asymmetrical arginine methylation by host PRMT6 seems to diminish the transactivation capacity of Tat and affects the interaction with host CCNT1. Post-translationally, acetylation by EP300, CREBBP, GCN5L2/GCN5 and PCAF regulates the transactivation activity of Tat. EP300-mediated acetylation of Lys-50 promotes dissociation of Tat from the TAR RNA through the competitive binding to PCAF's bromodomain. In addition, the non-acetylated Tat's N-terminus can also interact with PCAF. PCAF-mediated acetylation of Lys-28 enhances Tat's binding to CCNT1. Lys-50 is deacetylated by SIRT1. Polyubiquitination by host MDM2 does not target Tat to degradation, but activates its transactivation function and fosters interaction with CCNT1 and TAR RNA. In terms of processing, phosphorylated by EIF2AK2 on serine and threonine residues adjacent to the basic region important for TAR RNA binding and function. Phosphorylation of Tat by EIF2AK2 is dependent on the prior activation of EIF2AK2 by dsRNA.

The protein localises to the host nucleus. It is found in the host nucleolus. Its subcellular location is the host cytoplasm. The protein resides in the secreted. Its function is as follows. Transcriptional activator that increases RNA Pol II processivity, thereby increasing the level of full-length viral transcripts. Recognizes a hairpin structure at the 5'-LTR of the nascent viral mRNAs referred to as the transactivation responsive RNA element (TAR) and recruits the cyclin T1-CDK9 complex (P-TEFb complex) that will in turn hyperphosphorylate the RNA polymerase II to allow efficient elongation. The CDK9 component of P-TEFb and other Tat-activated kinases hyperphosphorylate the C-terminus of RNA Pol II that becomes stabilized and much more processive. Other factors such as HTATSF1/Tat-SF1, SUPT5H/SPT5, and HTATIP2 are also important for Tat's function. Besides its effect on RNA Pol II processivity, Tat induces chromatin remodeling of proviral genes by recruiting the histone acetyltransferases (HATs) CREBBP, EP300 and PCAF to the chromatin. This also contributes to the increase in proviral transcription rate, especially when the provirus integrates in transcriptionally silent region of the host genome. To ensure maximal activation of the LTR, Tat mediates nuclear translocation of NF-kappa-B by interacting with host RELA. Through its interaction with host TBP, Tat may also modulate transcription initiation. Tat can reactivate a latently infected cell by penetrating in it and transactivating its LTR promoter. In the cytoplasm, Tat is thought to act as a translational activator of HIV-1 mRNAs. Extracellular circulating Tat can be endocytosed by surrounding uninfected cells via the binding to several surface receptors such as CD26, CXCR4, heparan sulfate proteoglycans (HSPG) or LDLR. Neurons are rarely infected, but they internalize Tat via their LDLR. Through its interaction with nuclear HATs, Tat is potentially able to control the acetylation-dependent cellular gene expression. Modulates the expression of many cellular genes involved in cell survival, proliferation or in coding for cytokines or cytokine receptors. Tat plays a role in T-cell and neurons apoptosis. Tat induced neurotoxicity and apoptosis probably contribute to neuroAIDS. Circulating Tat also acts as a chemokine-like and/or growth factor-like molecule that binds to specific receptors on the surface of the cells, affecting many cellular pathways. In the vascular system, Tat binds to ITGAV/ITGB3 and ITGA5/ITGB1 integrins dimers at the surface of endothelial cells and competes with bFGF for heparin-binding sites, leading to an excess of soluble bFGF. The chain is Protein Tat from Homo sapiens (Human).